The sequence spans 154 residues: Myoglobin (154 aa).

The Globin domain maps to 2-148 (GLSDGEWQLV…FRNDIAAKYK (147 aa)). A Phosphoserine modification is found at serine 4. Histidine 65 contributes to the nitrite binding site. Histidine 65 lines the O2 pocket. A Phosphothreonine modification is found at threonine 68. Residue histidine 94 coordinates heme b.

It belongs to the globin family. Monomeric.

The protein localises to the cytoplasm. Its subcellular location is the sarcoplasm. It catalyses the reaction Fe(III)-heme b-[protein] + nitric oxide + H2O = Fe(II)-heme b-[protein] + nitrite + 2 H(+). The catalysed reaction is H2O2 + AH2 = A + 2 H2O. Functionally, monomeric heme protein which primary function is to store oxygen and facilitate its diffusion within muscle tissues. Reversibly binds oxygen through a pentacoordinated heme iron and enables its timely and efficient release as needed during periods of heightened demand. Depending on the oxidative conditions of tissues and cells, and in addition to its ability to bind oxygen, it also has a nitrite reductase activity whereby it regulates the production of bioactive nitric oxide. Under stress conditions, like hypoxia and anoxia, it also protects cells against reactive oxygen species thanks to its pseudoperoxidase activity. The chain is Myoglobin (MB) from Erinaceus europaeus (Western European hedgehog).